The chain runs to 68 residues: DNA-directed RNA polymerase subunit Rpo10 (68 aa).

Residues cysteine 7, cysteine 10, cysteine 44, and cysteine 45 each coordinate Zn(2+).

Belongs to the archaeal Rpo10/eukaryotic RPB10 RNA polymerase subunit family. Part of the RNA polymerase complex. Zn(2+) serves as cofactor.

The protein localises to the cytoplasm. It carries out the reaction RNA(n) + a ribonucleoside 5'-triphosphate = RNA(n+1) + diphosphate. In terms of biological role, DNA-dependent RNA polymerase (RNAP) catalyzes the transcription of DNA into RNA using the four ribonucleoside triphosphates as substrates. The protein is DNA-directed RNA polymerase subunit Rpo10 of Methanococcus maripaludis (strain DSM 14266 / JCM 13030 / NBRC 101832 / S2 / LL).